The chain runs to 209 residues: Probable GTP-binding protein EngB (209 aa).

The 177-residue stretch at 22–198 folds into the EngB-type G domain; that stretch reads TPLEIAFVGR…NRTVGSWFDA (177 aa). Mg(2+) is bound by residues S37 and T59.

The protein belongs to the TRAFAC class TrmE-Era-EngA-EngB-Septin-like GTPase superfamily. EngB GTPase family. Mg(2+) is required as a cofactor.

Functionally, necessary for normal cell division and for the maintenance of normal septation. In Neisseria meningitidis serogroup C (strain 053442), this protein is Probable GTP-binding protein EngB.